Consider the following 463-residue polypeptide: Putative ankyrin repeat protein R579 (463 aa).

ANK repeat units follow at residues 124–154 (LKTDLMFYAVSKNVSIDVINFLIDMDCKCTI), 156–181 (SITRAIAEKKLDIAKIIIDHNPSENI), 242–271 (KEKNISSYVIQSNSLNVVKTFVEHGLQFNP), 273–299 (IYLWVNGNSESENIVRYIIELGIDYRP), 300–328 (HIDRLLKICITSGTFSHLEYLINLGVSQE), 329–355 (NINEAFLTAVSEDKFELIKYLIYMGAD), 356–385 (INYKNTIAASYTDNIDVLKYLIEKGADITT), and 387–416 (GSNDVINHAIGSHQSDFCRCLLENGATITL).

This is Putative ankyrin repeat protein R579 from Acanthamoeba polyphaga (Amoeba).